We begin with the raw amino-acid sequence, 67 residues long: ATP synthase F(0) complex subunit 8 (67 aa).

Residues 8–24 (TWSITIMSMIMTLFIVF) form a helical membrane-spanning segment. The residue at position 54 (K54) is an N6-acetyllysine; alternate. Residue K54 is modified to N6-succinyllysine; alternate. Position 57 is an N6-acetyllysine (K57).

It belongs to the ATPase protein 8 family. Component of the ATP synthase complex composed at least of ATP5F1A/subunit alpha, ATP5F1B/subunit beta, ATP5MC1/subunit c (homooctomer), MT-ATP6/subunit a, MT-ATP8/subunit 8, ATP5ME/subunit e, ATP5MF/subunit f, ATP5MG/subunit g, ATP5MK/subunit k, ATP5MJ/subunit j, ATP5F1C/subunit gamma, ATP5F1D/subunit delta, ATP5F1E/subunit epsilon, ATP5PF/subunit F6, ATP5PB/subunit b, ATP5PD/subunit d, ATP5PO/subunit OSCP. ATP synthase complex consists of a soluble F(1) head domain (subunits alpha(3) and beta(3)) - the catalytic core - and a membrane F(0) domain - the membrane proton channel (subunits c, a, 8, e, f, g, k and j). These two domains are linked by a central stalk (subunits gamma, delta, and epsilon) rotating inside the F1 region and a stationary peripheral stalk (subunits F6, b, d, and OSCP). Interacts with PRICKLE3.

It localises to the mitochondrion membrane. Subunit 8, of the mitochondrial membrane ATP synthase complex (F(1)F(0) ATP synthase or Complex V) that produces ATP from ADP in the presence of a proton gradient across the membrane which is generated by electron transport complexes of the respiratory chain. ATP synthase complex consist of a soluble F(1) head domain - the catalytic core - and a membrane F(1) domain - the membrane proton channel. These two domains are linked by a central stalk rotating inside the F(1) region and a stationary peripheral stalk. During catalysis, ATP synthesis in the catalytic domain of F(1) is coupled via a rotary mechanism of the central stalk subunits to proton translocation. In vivo, can only synthesize ATP although its ATP hydrolase activity can be activated artificially in vitro. Part of the complex F(0) domain. This chain is ATP synthase F(0) complex subunit 8, found in Felis catus (Cat).